We begin with the raw amino-acid sequence, 414 residues long: Gamma-glutamyl phosphate reductase (414 aa).

This sequence belongs to the gamma-glutamyl phosphate reductase family.

The protein localises to the cytoplasm. The catalysed reaction is L-glutamate 5-semialdehyde + phosphate + NADP(+) = L-glutamyl 5-phosphate + NADPH + H(+). It participates in amino-acid biosynthesis; L-proline biosynthesis; L-glutamate 5-semialdehyde from L-glutamate: step 2/2. Catalyzes the NADPH-dependent reduction of L-glutamate 5-phosphate into L-glutamate 5-semialdehyde and phosphate. The product spontaneously undergoes cyclization to form 1-pyrroline-5-carboxylate. In Xanthomonas campestris pv. campestris (strain B100), this protein is Gamma-glutamyl phosphate reductase.